A 754-amino-acid polypeptide reads, in one-letter code: FAD-dependent monooxygenase ntnA (754 aa).

A helical membrane pass occupies residues 3–23 (IPFKVLIIGGGVAGLTLAIML). Positions 34, 48, and 109 each coordinate FAD. Residue Y218 is part of the active site. FAD is bound by residues D311 and A324. The next 4 membrane-spanning stretches (helical) occupy residues 446–466 (PLATFSWVTVLILAASSPWLA), 486–506 (AEVLELYISILSVSISGMWVI), 536–556 (ILPIYICFYILSSQSVVYYYM), and 563–583 (LGVAKALLPALLVVYTVSAVC). A glycan (N-linked (GlcNAc...) asparagine) is linked at N586. Residues 595 to 615 (SWWFTADFAFPVVAYLSGMFL) form a helical membrane-spanning segment. An N-linked (GlcNAc...) asparagine glycan is attached at N616. Helical transmembrane passes span 644–664 (IAFVGFVAYAALASQYGTTIL) and 679–697 (LASLTTVTTLWCLYSAWEL). N-linked (GlcNAc...) asparagine glycosylation occurs at N701. A helical transmembrane segment spans residues 712–732 (LTILSSTIFGGPAATLAGTFI).

Belongs to the paxM FAD-dependent monooxygenase family. FAD is required as a cofactor.

The protein localises to the membrane. It participates in secondary metabolite biosynthesis; terpenoid biosynthesis. Its function is as follows. FAD-dependent monooxygenase; part of the gene cluster that mediates the biosynthesis of the meroterpenoids nectripenoids A and B, as well as cochliquninone D and isocochliquninone E. The pathway probably begins with the HR-PKS ntnH that catalyzes two chain-extension steps to form a reduced triketide, which then primes the SAT domain in the NR-PKS ntnG to initiate three more cycles of extension to give a linear hexaketide corresponding to the polyketide part of nectripenoids. The FAD-dependent monooxygenase ntnJ then performs an oxidative decarboxylation at C11 of the ntnH/ntnG product, via an electrophilic aromatic hydroxylation with concomitant ipso-decarboxylation. The membrane-bound polyprenyl transferase ntnF then introduces a farnesyl group before the FAD-dependent monooxygenase ntnK functions as the first epoxidase on terminal C12'-C13' olefin, followed by a second epoxidation on C7'-C8' catalyzed by ntnA. The terpene cyclase/mutase ntnI then initiates the sequential tricyclic ring formation through protonation of the terminal epoxide and catalyzes the regioselective and stereoselective 6/6/6-tricyclic ring formation. The cytochrome P450 monooxygenase ntnM may then hydroxylate C1'. This Nectria sp protein is FAD-dependent monooxygenase ntnA.